Here is a 485-residue protein sequence, read N- to C-terminus: Inosine-5'-monophosphate dehydrogenase (485 aa).

CBS domains lie at 95–154 (VITN…IDDV) and 155–215 (MTKE…AKDS). Residues Asp-249 and 299–301 (GIG) contribute to the NAD(+) site. K(+)-binding residues include Gly-301 and Gly-303. Residue Ser-304 coordinates IMP. Cys-306 lines the K(+) pocket. Cys-306 functions as the Thioimidate intermediate in the catalytic mechanism. Residues 339–341 (DGG), 362–363 (GS), and 386–390 (YRGMG) contribute to the IMP site. Arg-402 acts as the Proton acceptor in catalysis. Residue Glu-414 participates in IMP binding. Positions 468, 469, and 470 each coordinate K(+).

This sequence belongs to the IMPDH/GMPR family. As to quaternary structure, homotetramer. K(+) serves as cofactor.

It catalyses the reaction IMP + NAD(+) + H2O = XMP + NADH + H(+). Its pathway is purine metabolism; XMP biosynthesis via de novo pathway; XMP from IMP: step 1/1. Its activity is regulated as follows. Mycophenolic acid (MPA) is a non-competitive inhibitor that prevents formation of the closed enzyme conformation by binding to the same site as the amobile flap. In contrast, mizoribine monophosphate (MZP) is a competitive inhibitor that induces the closed conformation. MPA is a potent inhibitor of mammalian IMPDHs but a poor inhibitor of the bacterial enzymes. MZP is a more potent inhibitor of bacterial IMPDH. In terms of biological role, catalyzes the conversion of inosine 5'-phosphate (IMP) to xanthosine 5'-phosphate (XMP), the first committed and rate-limiting step in the de novo synthesis of guanine nucleotides, and therefore plays an important role in the regulation of cell growth. This is Inosine-5'-monophosphate dehydrogenase from Halalkalibacterium halodurans (strain ATCC BAA-125 / DSM 18197 / FERM 7344 / JCM 9153 / C-125) (Bacillus halodurans).